Here is a 468-residue protein sequence, read N- to C-terminus: Aspartate ammonia-lyase (468 aa).

Residues Thr-99, Ser-138, Thr-139, Asn-140, and Thr-185 each contribute to the L-aspartate site. The SS loop stretch occupies residues 315 to 324 (GSSIMPGKVN). Ser-316 acts as the Proton acceptor in catalysis. Ser-317 and Lys-322 together coordinate L-aspartate.

It belongs to the class-II fumarase/aspartase family. Aspartase subfamily. Homotetramer.

The catalysed reaction is L-aspartate = fumarate + NH4(+). Its function is as follows. Catalyzes the reversible conversion of L-aspartate to fumarate and ammonia. This chain is Aspartate ammonia-lyase (aspA), found in Helicobacter pylori (strain ATCC 700392 / 26695) (Campylobacter pylori).